A 385-amino-acid chain; its full sequence is Alkanesulfonate monooxygenase 2 (385 aa).

It belongs to the SsuD family.

The catalysed reaction is an alkanesulfonate + FMNH2 + O2 = an aldehyde + FMN + sulfite + H2O + 2 H(+). In terms of biological role, catalyzes the desulfonation of aliphatic sulfonates. The sequence is that of Alkanesulfonate monooxygenase 2 (ssuD2) from Mesorhizobium japonicum (strain LMG 29417 / CECT 9101 / MAFF 303099) (Mesorhizobium loti (strain MAFF 303099)).